Reading from the N-terminus, the 342-residue chain is Uricase (342 aa).

Active-site charge relay system residues include K35 and T80. Urate-binding residues include T80, D81, F204, R221, V269, Q270, and N296. Catalysis depends on H298, which acts as the Charge relay system. The Microbody targeting signal signature appears at 340–342 (SHL).

It belongs to the uricase family. As to expression, malpighian tubules.

The protein resides in the peroxisome. It catalyses the reaction urate + O2 + H2O = 5-hydroxyisourate + H2O2. The protein operates within purine metabolism; urate degradation; (S)-allantoin from urate: step 1/3. Its activity is regulated as follows. Repressed by 20-hydroxyecdysone. Catalyzes the oxidation of uric acid to 5-hydroxyisourate, which is further processed to form (S)-allantoin. In Drosophila virilis (Fruit fly), this protein is Uricase (Uro).